The following is a 315-amino-acid chain: Aspartate carbamoyltransferase catalytic subunit (315 aa).

Carbamoyl phosphate is bound by residues Arg64 and Thr65. Lys92 provides a ligand contact to L-aspartate. 3 residues coordinate carbamoyl phosphate: Arg114, His142, and Gln145. Residues Arg175 and Arg229 each contribute to the L-aspartate site. 2 residues coordinate carbamoyl phosphate: Gly270 and Pro271.

The protein belongs to the aspartate/ornithine carbamoyltransferase superfamily. ATCase family. Heterododecamer (2C3:3R2) of six catalytic PyrB chains organized as two trimers (C3), and six regulatory PyrI chains organized as three dimers (R2).

The catalysed reaction is carbamoyl phosphate + L-aspartate = N-carbamoyl-L-aspartate + phosphate + H(+). It functions in the pathway pyrimidine metabolism; UMP biosynthesis via de novo pathway; (S)-dihydroorotate from bicarbonate: step 2/3. In terms of biological role, catalyzes the condensation of carbamoyl phosphate and aspartate to form carbamoyl aspartate and inorganic phosphate, the committed step in the de novo pyrimidine nucleotide biosynthesis pathway. This is Aspartate carbamoyltransferase catalytic subunit from Methylorubrum populi (strain ATCC BAA-705 / NCIMB 13946 / BJ001) (Methylobacterium populi).